The sequence spans 745 residues: Meiotic driver SPOK3 (745 aa).

Residues 4–34 (KDRITQLLRELEEAKAREAQERCEKERLQLE) are a coiled coil. Disordered regions lie at residues 173–222 (ELTQ…DGVG) and 407–487 (LSSA…VDPQ). A compositionally biased stretch (basic and acidic residues) spans 188–197 (TSDRSLERRQ). Polar residues-rich tracts occupy residues 208-217 (KSKYICSNRQ) and 409-422 (SAPSSQNTDISEYT). The interval 214–325 (SNRQPDGVGI…LLLYVDRDDW (112 aa)) is required for antidote activity. Basic and acidic residues predominate over residues 466–482 (AKRERGPSSGGKDDGRS). The segment at 491–745 (QYCTQACLLG…SPMATPSHGG (255 aa)) is required for poison activity.

It is found in the cytoplasm. It localises to the nucleus. Functionally, promotes unequal transmission of alleles from the parental zygote to progeny spores by acting as poison/antidote system, leading to poisoning of progeny that do not inherit the allele. May possess DNA nuclease activity that leads to spore killing, and a kinase activity that confers resistance to the nuclease activity. The chain is Meiotic driver SPOK3 from Podospora anserina (Pleurage anserina).